We begin with the raw amino-acid sequence, 114 residues long: Cytochrome c2 (114 aa).

Pyrrolidone carboxylic acid is present on Gln1. Residues Cys13, Cys16, His17, and Met93 each coordinate heme c.

This sequence belongs to the cytochrome c family. Post-translationally, binds 1 heme c group covalently per subunit.

It is found in the periplasm. Its function is as follows. Cytochrome c2 is found mainly in purple, non-sulfur, photosynthetic bacteria where it functions as the electron donor to the oxidized bacteriochlorophyll in the photophosphorylation pathway. However, it may also have a role in the respiratory chain and is found in some non-photosynthetic bacteria. This chain is Cytochrome c2, found in Rhodopseudomonas palustris.